Reading from the N-terminus, the 212-residue chain is Elongation factor Ts (212 aa).

The interval Ser-82–Val-85 is involved in Mg(2+) ion dislocation from EF-Tu.

Belongs to the EF-Ts family.

The protein localises to the cytoplasm. Functionally, associates with the EF-Tu.GDP complex and induces the exchange of GDP to GTP. It remains bound to the aminoacyl-tRNA.EF-Tu.GTP complex up to the GTP hydrolysis stage on the ribosome. This Solibacter usitatus (strain Ellin6076) protein is Elongation factor Ts.